A 666-amino-acid polypeptide reads, in one-letter code: Protein-arginine deiminase type-4 (666 aa).

Ca(2+) contacts are provided by Asn-153, Asp-155, Asp-165, Asp-168, Asp-176, and Asp-179. Arg-212 and Arg-218 each carry citrulline. Position 349 (Gln-349) interacts with Ca(2+). The active site involves Asp-350. Glu-351, Glu-353, Asp-369, and Ser-370 together coordinate Ca(2+). A citrulline mark is found at Arg-372, Arg-374, and Arg-383. Arg-374 lines the substrate pocket. Ca(2+)-binding residues include Phe-407, Leu-410, and Glu-411. Residues His-471, Asp-473, and Cys-648 contribute to the active site.

The protein belongs to the protein arginine deiminase family. Requires Ca(2+) as cofactor. In terms of processing, autocitrullination at Arg-372 and Arg-374 inactivates the enzyme. As to expression, epidermis.

It is found in the cytoplasm. Its subcellular location is the nucleus. The protein resides in the cytoplasmic granule. The enzyme catalyses L-arginyl-[protein] + H2O = L-citrullyl-[protein] + NH4(+). In terms of biological role, catalyzes the citrullination/deimination of arginine residues of proteins such as histones, thereby playing a key role in histone code and regulation of stem cell maintenance. Citrullinates histone H1 at 'Arg-54' (to form H1R54ci), histone H3 at 'Arg-2', 'Arg-8', 'Arg-17' and/or 'Arg-26' (to form H3R2ci, H3R8ci, H3R17ci, H3R26ci, respectively) and histone H4 at 'Arg-3' (to form H4R3ci). Acts as a key regulator of stem cell maintenance by mediating citrullination of histone H1: citrullination of 'Arg-54' of histone H1 (H1R54ci) results in H1 displacement from chromatin and global chromatin decondensation, thereby promoting pluripotency and stem cell maintenance. Promotes profound chromatin decondensation during the innate immune response to infection in neutrophils by mediating formation of H1R54ci. Required for the formation of neutrophil extracellular traps (NETs); NETs are mainly composed of DNA fibers and are released by neutrophils to bind pathogens during inflammation. Citrullination of histone H3 prevents their methylation by CARM1 and HRMT1L2/PRMT1 and represses transcription. Citrullinates EP300/P300 at 'Arg-2142', which favors its interaction with NCOA2/GRIP1. The polypeptide is Protein-arginine deiminase type-4 (Padi4) (Rattus norvegicus (Rat)).